The chain runs to 174 residues: ATP-dependent protease subunit HslV (174 aa).

The active site involves T2. Residues G157, C160, and T163 each coordinate Na(+).

Belongs to the peptidase T1B family. HslV subfamily. As to quaternary structure, a double ring-shaped homohexamer of HslV is capped on each side by a ring-shaped HslU homohexamer. The assembly of the HslU/HslV complex is dependent on binding of ATP.

The protein resides in the cytoplasm. The enzyme catalyses ATP-dependent cleavage of peptide bonds with broad specificity.. Allosterically activated by HslU binding. Functionally, protease subunit of a proteasome-like degradation complex believed to be a general protein degrading machinery. The chain is ATP-dependent protease subunit HslV from Cellvibrio japonicus (strain Ueda107) (Pseudomonas fluorescens subsp. cellulosa).